The chain runs to 361 residues: Chorismate synthase (361 aa).

Arginine 48 and arginine 54 together coordinate NADP(+). FMN is bound by residues 125–127 (RSS), 238–239 (NA), glycine 278, 293–297 (KPTSS), and arginine 319.

The protein belongs to the chorismate synthase family. As to quaternary structure, homotetramer. The cofactor is FMNH2.

The enzyme catalyses 5-O-(1-carboxyvinyl)-3-phosphoshikimate = chorismate + phosphate. It participates in metabolic intermediate biosynthesis; chorismate biosynthesis; chorismate from D-erythrose 4-phosphate and phosphoenolpyruvate: step 7/7. In terms of biological role, catalyzes the anti-1,4-elimination of the C-3 phosphate and the C-6 proR hydrogen from 5-enolpyruvylshikimate-3-phosphate (EPSP) to yield chorismate, which is the branch point compound that serves as the starting substrate for the three terminal pathways of aromatic amino acid biosynthesis. This reaction introduces a second double bond into the aromatic ring system. This chain is Chorismate synthase, found in Photorhabdus laumondii subsp. laumondii (strain DSM 15139 / CIP 105565 / TT01) (Photorhabdus luminescens subsp. laumondii).